The chain runs to 225 residues: UPF0758 protein NMCC_1157 (225 aa).

Residues 102 to 224 (VLSDPDTVAD…VRSFRQLGLM (123 aa)) enclose the MPN domain. Positions 173, 175, and 186 each coordinate Zn(2+). The JAMM motif motif lies at 173–186 (HNHPGGSPEPSQED).

Belongs to the UPF0758 family.

The polypeptide is UPF0758 protein NMCC_1157 (Neisseria meningitidis serogroup C (strain 053442)).